Consider the following 205-residue polypeptide: Small ribosomal subunit protein uS4 (205 aa).

The region spanning 94–157 (SRLDTVVYRM…KQIPLIQESV (64 aa)) is the S4 RNA-binding domain.

The protein belongs to the universal ribosomal protein uS4 family. As to quaternary structure, part of the 30S ribosomal subunit. Contacts protein S5. The interaction surface between S4 and S5 is involved in control of translational fidelity.

Functionally, one of the primary rRNA binding proteins, it binds directly to 16S rRNA where it nucleates assembly of the body of the 30S subunit. With S5 and S12 plays an important role in translational accuracy. The chain is Small ribosomal subunit protein uS4 from Rickettsia conorii (strain ATCC VR-613 / Malish 7).